Here is a 152-residue protein sequence, read N- to C-terminus: D-aminoacyl-tRNA deacylase (152 aa).

The Gly-cisPro motif, important for rejection of L-amino acids signature appears at 142–143 (GP).

This sequence belongs to the DTD family. Homodimer.

The protein localises to the cytoplasm. The catalysed reaction is glycyl-tRNA(Ala) + H2O = tRNA(Ala) + glycine + H(+). The enzyme catalyses a D-aminoacyl-tRNA + H2O = a tRNA + a D-alpha-amino acid + H(+). Its function is as follows. An aminoacyl-tRNA editing enzyme that deacylates mischarged D-aminoacyl-tRNAs. Also deacylates mischarged glycyl-tRNA(Ala), protecting cells against glycine mischarging by AlaRS. Acts via tRNA-based rather than protein-based catalysis; rejects L-amino acids rather than detecting D-amino acids in the active site. By recycling D-aminoacyl-tRNA to D-amino acids and free tRNA molecules, this enzyme counteracts the toxicity associated with the formation of D-aminoacyl-tRNA entities in vivo and helps enforce protein L-homochirality. This chain is D-aminoacyl-tRNA deacylase, found in Burkholderia cenocepacia (strain ATCC BAA-245 / DSM 16553 / LMG 16656 / NCTC 13227 / J2315 / CF5610) (Burkholderia cepacia (strain J2315)).